A 248-amino-acid chain; its full sequence is MADVAGTSNRDFRGREQRLFNSEQYNYNNSLNGEVSVWVYAYYSDGSVLVINKNSQYKVGISETFKALKEYREGQRNDSYDEYEVNQSIYYPNGGDAHKFHSNAKPRAIQIIFSPSVNVRTIKMAKDNSVSVPDDYLQRSHPWEATGIKYRKIKRDGEIVGYSHYFELPHEYNSISLAVSGVHKNPSSYNVGSAHNVMDVFQSCDLALRFCNRYWAELELVNHYISPNAYPYLDINNHSYGVALSNHQ.

4 N-linked (GlcNAc...) asparagine; by host glycosylation sites follow: N28, N77, N86, and N237.

As to quaternary structure, forms crystal-like bodies by self-assembly.

In terms of biological role, major component of the virus occlusion bodies, which are large proteinaceous structures (polyhedra), that protect the virus from the outside environment for extended periods until they are ingested by insect larvae. The chain is Polyhedrin (S10) from Lymantria dispar cypovirus 1 (isolate Rao) (LdCPV-1).